The following is a 249-amino-acid chain: 5'-nucleotidase SurE (249 aa).

A divalent metal cation contacts are provided by D8, D9, S39, and N91.

This sequence belongs to the SurE nucleotidase family. Requires a divalent metal cation as cofactor.

The protein localises to the cytoplasm. It catalyses the reaction a ribonucleoside 5'-phosphate + H2O = a ribonucleoside + phosphate. Functionally, nucleotidase that shows phosphatase activity on nucleoside 5'-monophosphates. This Haemophilus influenzae (strain PittGG) protein is 5'-nucleotidase SurE.